We begin with the raw amino-acid sequence, 492 residues long: Ketol-acid reductoisomerase (NADP(+)) (492 aa).

The KARI N-terminal Rossmann domain occupies 14–208 (LDQLGRCRFM…GGHKAGVLES (195 aa)). Residues 45 to 48 (CGAQ), Arg68, Arg76, Ser78, and 108 to 110 (DKQ) contribute to the NADP(+) site. His132 is an active-site residue. Gly158 is a binding site for NADP(+). KARI C-terminal knotted domains are found at residues 209-344 (SFVA…NAPK) and 345-485 (YDGK…MTDM). Mg(2+) contacts are provided by Asp217, Glu221, Glu389, and Glu393. Ser414 provides a ligand contact to substrate.

This sequence belongs to the ketol-acid reductoisomerase family. Mg(2+) serves as cofactor.

The catalysed reaction is (2R)-2,3-dihydroxy-3-methylbutanoate + NADP(+) = (2S)-2-acetolactate + NADPH + H(+). The enzyme catalyses (2R,3R)-2,3-dihydroxy-3-methylpentanoate + NADP(+) = (S)-2-ethyl-2-hydroxy-3-oxobutanoate + NADPH + H(+). It participates in amino-acid biosynthesis; L-isoleucine biosynthesis; L-isoleucine from 2-oxobutanoate: step 2/4. It functions in the pathway amino-acid biosynthesis; L-valine biosynthesis; L-valine from pyruvate: step 2/4. Its function is as follows. Involved in the biosynthesis of branched-chain amino acids (BCAA). Catalyzes an alkyl-migration followed by a ketol-acid reduction of (S)-2-acetolactate (S2AL) to yield (R)-2,3-dihydroxy-isovalerate. In the isomerase reaction, S2AL is rearranged via a Mg-dependent methyl migration to produce 3-hydroxy-3-methyl-2-ketobutyrate (HMKB). In the reductase reaction, this 2-ketoacid undergoes a metal-dependent reduction by NADPH to yield (R)-2,3-dihydroxy-isovalerate. The protein is Ketol-acid reductoisomerase (NADP(+)) of Haemophilus influenzae (strain PittEE).